A 198-amino-acid chain; its full sequence is Transcription factor FapR (198 aa).

The region spanning 102–169 is the MaoC-like domain; that stretch reads NRIARGHHLF…RTIVEVNSYV (68 aa).

It belongs to the FapR family.

Transcriptional factor involved in regulation of membrane lipid biosynthesis by repressing genes involved in fatty acid and phospholipid metabolism. The sequence is that of Transcription factor FapR from Geobacillus sp. (strain WCH70).